Consider the following 427-residue polypeptide: Glutamate-1-semialdehyde 2,1-aminomutase (427 aa).

Residue Lys-263 is modified to N6-(pyridoxal phosphate)lysine.

Belongs to the class-III pyridoxal-phosphate-dependent aminotransferase family. HemL subfamily. Homodimer. It depends on pyridoxal 5'-phosphate as a cofactor.

Its subcellular location is the cytoplasm. It catalyses the reaction (S)-4-amino-5-oxopentanoate = 5-aminolevulinate. Its pathway is porphyrin-containing compound metabolism; protoporphyrin-IX biosynthesis; 5-aminolevulinate from L-glutamyl-tRNA(Glu): step 2/2. The polypeptide is Glutamate-1-semialdehyde 2,1-aminomutase (Caldicellulosiruptor saccharolyticus (strain ATCC 43494 / DSM 8903 / Tp8T 6331)).